The primary structure comprises 239 residues: Ribonuclease PH (239 aa).

Residues Arg86 and 124-126 (GTR) contribute to the phosphate site.

This sequence belongs to the RNase PH family. In terms of assembly, homohexameric ring arranged as a trimer of dimers.

It carries out the reaction tRNA(n+1) + phosphate = tRNA(n) + a ribonucleoside 5'-diphosphate. In terms of biological role, phosphorolytic 3'-5' exoribonuclease that plays an important role in tRNA 3'-end maturation. Removes nucleotide residues following the 3'-CCA terminus of tRNAs; can also add nucleotides to the ends of RNA molecules by using nucleoside diphosphates as substrates, but this may not be physiologically important. Probably plays a role in initiation of 16S rRNA degradation (leading to ribosome degradation) during starvation. The polypeptide is Ribonuclease PH (Rickettsia africae (strain ESF-5)).